We begin with the raw amino-acid sequence, 194 residues long: dTTP/UTP pyrophosphatase (194 aa).

The active-site Proton acceptor is the Asp-76.

The protein belongs to the Maf family. YhdE subfamily. A divalent metal cation serves as cofactor.

It localises to the cytoplasm. The enzyme catalyses dTTP + H2O = dTMP + diphosphate + H(+). It catalyses the reaction UTP + H2O = UMP + diphosphate + H(+). In terms of biological role, nucleoside triphosphate pyrophosphatase that hydrolyzes dTTP and UTP. May have a dual role in cell division arrest and in preventing the incorporation of modified nucleotides into cellular nucleic acids. The chain is dTTP/UTP pyrophosphatase from Shewanella oneidensis (strain ATCC 700550 / JCM 31522 / CIP 106686 / LMG 19005 / NCIMB 14063 / MR-1).